The sequence spans 596 residues: Elongation factor 4 (596 aa).

Positions 2 to 184 (KHIRNFSIIA…VIVAKIPPPE (183 aa)) constitute a tr-type G domain. GTP is bound by residues 14-19 (DHGKST) and 131-134 (NKID).

This sequence belongs to the TRAFAC class translation factor GTPase superfamily. Classic translation factor GTPase family. LepA subfamily.

The protein localises to the cell inner membrane. It catalyses the reaction GTP + H2O = GDP + phosphate + H(+). Required for accurate and efficient protein synthesis under certain stress conditions. May act as a fidelity factor of the translation reaction, by catalyzing a one-codon backward translocation of tRNAs on improperly translocated ribosomes. Back-translocation proceeds from a post-translocation (POST) complex to a pre-translocation (PRE) complex, thus giving elongation factor G a second chance to translocate the tRNAs correctly. Binds to ribosomes in a GTP-dependent manner. The polypeptide is Elongation factor 4 (Shewanella sp. (strain W3-18-1)).